A 98-amino-acid chain; its full sequence is Large ribosomal subunit protein bL21 (98 aa).

The protein belongs to the bacterial ribosomal protein bL21 family. Part of the 50S ribosomal subunit. Contacts protein L20.

Its function is as follows. This protein binds to 23S rRNA in the presence of protein L20. The chain is Large ribosomal subunit protein bL21 from Novosphingobium aromaticivorans (strain ATCC 700278 / DSM 12444 / CCUG 56034 / CIP 105152 / NBRC 16084 / F199).